Here is a 450-residue protein sequence, read N- to C-terminus: Probable malate:quinone oxidoreductase (450 aa).

This sequence belongs to the MQO family. The cofactor is FAD.

The enzyme catalyses (S)-malate + a quinone = a quinol + oxaloacetate. It participates in carbohydrate metabolism; tricarboxylic acid cycle; oxaloacetate from (S)-malate (quinone route): step 1/1. The polypeptide is Probable malate:quinone oxidoreductase (Helicobacter pylori (strain P12)).